Consider the following 466-residue polypeptide: Soluble pyridine nucleotide transhydrogenase (466 aa).

An FAD-binding site is contributed by 36–45 (ERYHNVGGGC).

It belongs to the class-I pyridine nucleotide-disulfide oxidoreductase family. FAD serves as cofactor.

The protein resides in the cytoplasm. The catalysed reaction is NAD(+) + NADPH = NADH + NADP(+). Functionally, conversion of NADPH, generated by peripheral catabolic pathways, to NADH, which can enter the respiratory chain for energy generation. The protein is Soluble pyridine nucleotide transhydrogenase of Citrobacter koseri (strain ATCC BAA-895 / CDC 4225-83 / SGSC4696).